A 204-amino-acid chain; its full sequence is Guanylate kinase (204 aa).

The 179-residue stretch at 4 to 182 (GLLYVISAPS…ALNQLRAIVQ (179 aa)) folds into the Guanylate kinase-like domain. 11–18 (APSGAGKT) contributes to the ATP binding site.

Belongs to the guanylate kinase family.

It is found in the cytoplasm. It catalyses the reaction GMP + ATP = GDP + ADP. Functionally, essential for recycling GMP and indirectly, cGMP. The sequence is that of Guanylate kinase from Methylococcus capsulatus (strain ATCC 33009 / NCIMB 11132 / Bath).